We begin with the raw amino-acid sequence, 174 residues long: Ribosome maturation factor RimM (174 aa).

The PRC barrel domain maps to 98–172 (AGEYYYHQIV…VVTVELMEGL (75 aa)).

It belongs to the RimM family. Binds ribosomal protein uS19.

It localises to the cytoplasm. Functionally, an accessory protein needed during the final step in the assembly of 30S ribosomal subunit, possibly for assembly of the head region. Essential for efficient processing of 16S rRNA. May be needed both before and after RbfA during the maturation of 16S rRNA. It has affinity for free ribosomal 30S subunits but not for 70S ribosomes. The protein is Ribosome maturation factor RimM of Lactiplantibacillus plantarum (strain ATCC BAA-793 / NCIMB 8826 / WCFS1) (Lactobacillus plantarum).